We begin with the raw amino-acid sequence, 238 residues long: Heme oxygenase (238 aa).

His-17 is a binding site for heme b.

This sequence belongs to the heme oxygenase family.

The protein localises to the plastid. It localises to the chloroplast. The catalysed reaction is heme b + 3 reduced [NADPH--hemoprotein reductase] + 3 O2 = biliverdin IXalpha + CO + Fe(2+) + 3 oxidized [NADPH--hemoprotein reductase] + 3 H2O + H(+). Catalyzes the opening of the heme ring with the release of iron. Key enzyme in the synthesis of the chromophoric part of the photosynthetic antennae. The protein is Heme oxygenase (pbsA) of Pyropia yezoensis (Susabi-nori).